The following is a 696-amino-acid chain: DNA ligase (696 aa).

NAD(+)-binding positions include 36 to 40, 85 to 86, and E123; these read DAEYD and SL. Residue K125 is the N6-AMP-lysine intermediate of the active site. Residues R146, E181, K319, and K343 each coordinate NAD(+). 4 residues coordinate Zn(2+): C437, C440, C455, and C461. The BRCT domain maps to 618–696; it reads PEGTSLAGKT…EDGLKALLGL (79 aa).

This sequence belongs to the NAD-dependent DNA ligase family. LigA subfamily. The cofactor is Mg(2+). Mn(2+) serves as cofactor.

It carries out the reaction NAD(+) + (deoxyribonucleotide)n-3'-hydroxyl + 5'-phospho-(deoxyribonucleotide)m = (deoxyribonucleotide)n+m + AMP + beta-nicotinamide D-nucleotide.. DNA ligase that catalyzes the formation of phosphodiester linkages between 5'-phosphoryl and 3'-hydroxyl groups in double-stranded DNA using NAD as a coenzyme and as the energy source for the reaction. It is essential for DNA replication and repair of damaged DNA. This is DNA ligase from Bordetella pertussis (strain Tohama I / ATCC BAA-589 / NCTC 13251).